Reading from the N-terminus, the 600-residue chain is Integrator complex subunit 11 (600 aa).

The Zn(2+) site is built by histidine 68, histidine 70, aspartate 72, histidine 73, histidine 157, and aspartate 178. The HXHXDH motif signature appears at 68–73 (HFHLDH). Glutamate 203 is an active-site residue. Lysine 381 is covalently cross-linked (Glycyl lysine isopeptide (Lys-Gly) (interchain with G-Cter in SUMO)). Residue histidine 414 participates in Zn(2+) binding. Glycyl lysine isopeptide (Lys-Gly) (interchain with G-Cter in SUMO) cross-links involve residues lysine 462 and lysine 475. A Nuclear localization signal motif is present at residues 469–479 (LLPEAKKPRLL).

Belongs to the metallo-beta-lactamase superfamily. RNA-metabolizing metallo-beta-lactamase-like family. INTS11 subfamily. Component of the Integrator complex, composed of core subunits INTS1, INTS2, INTS3, INTS4, INTS5, INTS6, INTS7, INTS8, INTS9/RC74, INTS10, INTS11/CPSF3L, INTS12, INTS13, INTS14 and INTS15. The core complex associates with protein phosphatase 2A subunits PPP2CA and PPP2R1A, to form the Integrator-PP2A (INTAC) complex. INTS11 is part of the RNA endonuclease subcomplex, composed of INTS4, INTS9, INTS11 and inositol hexakisphosphate (InsP6). Interacts with WDR73; interaction is required for the assembly of the RNA endonuclease subcomplex in the cytoplasm. Interacts with BRAT1; interaction is required for the assembly of the RNA endonuclease subcomplex and inhibits the endonuclease activity of INTS11 before formation of mature integrator complex. Zn(2+) is required as a cofactor. Post-translationally, sumoylated; sumoylation regulates its subcellular location and is required for integrator complex integrity.

Its subcellular location is the nucleus. The protein localises to the cytoplasm. With respect to regulation, the RNA endonuclease activity is inhibited by BRAT1 that forms hyrogen bond and hydrophobic interactions with the active site. Functionally, RNA endonuclease component of the integrator complex, a multiprotein complex that terminates RNA polymerase II (Pol II) transcription in the promoter-proximal region of genes. The integrator complex provides a quality checkpoint during transcription elongation by driving premature transcription termination of transcripts that are unfavorably configured for transcriptional elongation: the complex terminates transcription by (1) catalyzing dephosphorylation of the C-terminal domain (CTD) of Pol II subunit POLR2A/RPB1 and SUPT5H/SPT5, (2) degrading the exiting nascent RNA transcript via endonuclease activity and (3) promoting the release of Pol II from bound DNA. The integrator complex is also involved in terminating the synthesis of non-coding Pol II transcripts, such as enhancer RNAs (eRNAs), small nuclear RNAs (snRNAs), telomerase RNAs and long non-coding RNAs (lncRNAs). Within the integrator complex, INTS11 constitutes the RNA endonuclease subunit that degrades exiting nascent RNA transcripts. Mediates recruitment of cytoplasmic dynein to the nuclear envelope, probably as component of the integrator complex. This is Integrator complex subunit 11 (Ints11) from Rattus norvegicus (Rat).